We begin with the raw amino-acid sequence, 134 residues long: Cytochrome b5 (134 aa).

An N-acetylalanine modification is found at Ala-2. 3 positions are modified to N6-acetyllysine: Lys-7, Lys-10, and Lys-19. The Cytochrome b5 heme-binding domain maps to 9–85 (VKYYTLEEIQ…SKTYIIGELH (77 aa)). Heme contacts are provided by His-44 and His-68. A helical membrane pass occupies residues 109–131 (WWTNWVIPAISALVVALMYRLYM).

The protein belongs to the cytochrome b5 family.

The protein resides in the endoplasmic reticulum membrane. The protein localises to the microsome membrane. Its function is as follows. Cytochrome b5 is a membrane-bound hemoprotein functioning as an electron carrier for several membrane-bound oxygenases. It is also involved in several steps of the sterol biosynthesis pathway, particularly in the C-6 double bond introduction during the C-6 desaturation. The protein is Cytochrome b5 (Cyb5a) of Rattus norvegicus (Rat).